The following is a 363-amino-acid chain: tRNA N6-adenosine threonylcarbamoyltransferase (363 aa).

The Fe cation site is built by H121 and H125. Residues 143-147, D176, G189, and N287 each bind substrate; that span reads LASGG. D315 contacts Fe cation.

It belongs to the KAE1 / TsaD family. Requires Fe(2+) as cofactor.

It is found in the cytoplasm. It catalyses the reaction L-threonylcarbamoyladenylate + adenosine(37) in tRNA = N(6)-L-threonylcarbamoyladenosine(37) in tRNA + AMP + H(+). Required for the formation of a threonylcarbamoyl group on adenosine at position 37 (t(6)A37) in tRNAs that read codons beginning with adenine. Is involved in the transfer of the threonylcarbamoyl moiety of threonylcarbamoyl-AMP (TC-AMP) to the N6 group of A37, together with TsaE and TsaB. TsaD likely plays a direct catalytic role in this reaction. The sequence is that of tRNA N6-adenosine threonylcarbamoyltransferase from Rhodopseudomonas palustris (strain TIE-1).